We begin with the raw amino-acid sequence, 109 residues long: Spermidine export protein MdtI (109 aa).

At 1–5 (MAQFE) the chain is on the periplasmic side. A helical membrane pass occupies residues 6–26 (WVHAAWLALAIVLEIIANVFL). The Cytoplasmic portion of the chain corresponds to 27–35 (KFSDGFRRK). The helical transmembrane segment at 36 to 56 (IFGLLSLAAVLAAFSALSQAV) threads the bilayer. Over 57–63 (KGIDLSV) the chain is Periplasmic. Residues 64–84 (AYALWGGFGIAATLAAGWILF) form a helical membrane-spanning segment. Residues 85-87 (GQR) are Cytoplasmic-facing. Residues 88–108 (LNRKGWIGLVLLLAGMIMVKL) form a helical membrane-spanning segment. Ala-109 is a topological domain (periplasmic).

This sequence belongs to the drug/metabolite transporter (DMT) superfamily. Small multidrug resistance (SMR) (TC 2.A.7.1) family. MdtI subfamily. In terms of assembly, forms a complex with MdtJ.

Its subcellular location is the cell inner membrane. Catalyzes the excretion of spermidine. In Escherichia coli O6:H1 (strain CFT073 / ATCC 700928 / UPEC), this protein is Spermidine export protein MdtI (mdtI).